Here is a 904-residue protein sequence, read N- to C-terminus: Essential for maintenance of the cell wall protein 1 (904 aa).

6 TPR repeats span residues Trp-510 to Leu-544, Ile-563 to Val-596, Ala-603 to Ser-636, Phe-637 to His-670, Ala-671 to Lys-704, and Trp-706 to Lys-739.

The protein belongs to the TTC27 family.

It localises to the cytoplasm. It is found in the nucleus. Functionally, required for the maintenance of the cell wall integrity. The protein is Essential for maintenance of the cell wall protein 1 (EMW1) of Saccharomyces cerevisiae (strain ATCC 204508 / S288c) (Baker's yeast).